The following is a 1176-amino-acid chain: Leucine--tRNA ligase, cytoplasmic (1176 aa).

L-leucine-binding residues include Tyr-52 and Tyr-54. The short motif at His-60 to His-63 is the 'HIGH' region element. A disordered region spans residues Pro-115–Gly-142. Acidic residues predominate over residues Phe-117–Glu-126. Over residues Thr-127–Lys-139 the composition is skewed to basic and acidic residues. A Phosphoserine modification is found at Ser-167. Residues Gly-260–Glu-509 form an editing domain region. Residues Leu-594 and Ser-597 each contribute to the L-leucine site. Residues Lys-716–Ser-720 carry the 'KMSKS' region motif. Lys-719 contributes to the ATP binding site. Ser-720 is subject to Phosphoserine. An N6-acetyllysine mark is found at Lys-970 and Lys-1047.

The protein belongs to the class-I aminoacyl-tRNA synthetase family.

The protein localises to the cytoplasm. It carries out the reaction tRNA(Leu) + L-leucine + ATP = L-leucyl-tRNA(Leu) + AMP + diphosphate. It catalyses the reaction L-methionyl-tRNA(Leu) + H2O = tRNA(Leu) + L-methionine + H(+). With respect to regulation, 5-fluoro-1,3-dihydro-1-hydroxy-1,2-benzoxaborole inhibits LARS1 by forming a covalent adduct with the 3' adenosine of tRNA(Leu) at the editing site, thus locking the enzyme in an inactive conformation. In terms of biological role, aminoacyl-tRNA synthetase that catalyzes the specific attachment of leucine to its cognate tRNA (tRNA(Leu)). It performs tRNA aminoacylation in a two-step reaction: Leu is initially activated by ATP to form a leucyl-adenylate (Leu-AMP) intermediate; then the leucyl moiety is transferred to the acceptor 3' end of the tRNA to yield leucyl-tRNA. To improve the fidelity of catalytic reactions, it is also able to hydrolyze misactivated aminoacyl-adenylate intermediates (pre-transfer editing) and mischarged aminoacyl-tRNAs (post-transfer editing). This is Leucine--tRNA ligase, cytoplasmic (LARS1) from Pongo abelii (Sumatran orangutan).